Consider the following 55-residue polypeptide: UPF0434 protein BARBAKC583_1098 (55 aa).

The protein belongs to the UPF0434 family.

This Bartonella bacilliformis (strain ATCC 35685 / KC583 / Herrer 020/F12,63) protein is UPF0434 protein BARBAKC583_1098.